Here is a 669-residue protein sequence, read N- to C-terminus: Armadillo repeat-containing protein gudu (669 aa).

Positions 1-10 (MIGTSSGTSH) are enriched in polar residues. Residues 1–53 (MIGTSSGTSHNRSRKKKEQCGSCPNRFSKDKRQVAAEDSDTTEVESSTDEEER) form a disordered region. The segment covering 37 to 51 (EDSDTTEVESSTDEE) has biased composition (acidic residues). 10 ARM repeats span residues 100–139 (QINQ…DITL), 141–180 (IDIR…NVCK), 240–279 (KHNM…KCSS), 281–320 (PKFQ…KCAF), 322–365 (GTTR…MCAV), 367–406 (DANV…ECVR), 408–447 (QSNR…ECAE), 492–531 (DSAE…TIAQ), 574–613 (GNNT…KLSM), and 615–654 (PQNC…NIRE).

In terms of tissue distribution, highly expressed in testis.

Functionally, important for spermatogenesis where it may have a role in sperm individualization. This Drosophila melanogaster (Fruit fly) protein is Armadillo repeat-containing protein gudu.